A 186-amino-acid polypeptide reads, in one-letter code: Small ribosomal subunit protein uS5 (186 aa).

The 64-residue stretch at 20-83 folds into the S5 DRBM domain; sequence FVDKLVHINR…EAAKRDMIFV (64 aa).

The protein belongs to the universal ribosomal protein uS5 family. In terms of assembly, part of the 30S ribosomal subunit. Contacts proteins S4 and S8.

Functionally, with S4 and S12 plays an important role in translational accuracy. Its function is as follows. Located at the back of the 30S subunit body where it stabilizes the conformation of the head with respect to the body. The sequence is that of Small ribosomal subunit protein uS5 from Brucella ovis (strain ATCC 25840 / 63/290 / NCTC 10512).